A 349-amino-acid chain; its full sequence is Protein RecA (349 aa).

69 to 76 lines the ATP pocket; the sequence is GPESSGKT.

Belongs to the RecA family.

The protein resides in the cytoplasm. Its function is as follows. Can catalyze the hydrolysis of ATP in the presence of single-stranded DNA, the ATP-dependent uptake of single-stranded DNA by duplex DNA, and the ATP-dependent hybridization of homologous single-stranded DNAs. It interacts with LexA causing its activation and leading to its autocatalytic cleavage. The sequence is that of Protein RecA from Rippkaea orientalis (strain PCC 8801 / RF-1) (Cyanothece sp. (strain PCC 8801)).